Consider the following 217-residue polypeptide: Adenylate kinase (217 aa).

10–15 (GAGKGT) is an ATP binding site. An NMP region spans residues 30–59 (STGDMFRAAMKEETPLGLEAKSYIDKGELV). Residues threonine 31, arginine 36, 57 to 59 (ELV), 85 to 88 (GFPR), and glutamine 92 each bind AMP. The tract at residues 126-163 (GRRICSVCGTTYHLVFNPPKTPGICDKDGGELYQRADD) is LID. Arginine 127 serves as a coordination point for ATP. Zn(2+) contacts are provided by cysteine 130 and cysteine 133. 136 to 137 (TY) serves as a coordination point for ATP. Cysteine 150 and aspartate 153 together coordinate Zn(2+). Arginine 160 and arginine 171 together coordinate AMP. Glutamine 199 contributes to the ATP binding site.

Belongs to the adenylate kinase family. In terms of assembly, monomer.

Its subcellular location is the cytoplasm. The catalysed reaction is AMP + ATP = 2 ADP. It functions in the pathway purine metabolism; AMP biosynthesis via salvage pathway; AMP from ADP: step 1/1. Its function is as follows. Catalyzes the reversible transfer of the terminal phosphate group between ATP and AMP. Plays an important role in cellular energy homeostasis and in adenine nucleotide metabolism. The sequence is that of Adenylate kinase from Bacillus subtilis (strain 168).